A 126-amino-acid chain; its full sequence is RutC family protein bbp_334 (126 aa).

It belongs to the RutC family.

The protein is RutC family protein bbp_334 of Buchnera aphidicola subsp. Baizongia pistaciae (strain Bp).